The chain runs to 89 residues: Protein S100-A8 (89 aa).

Ala2 bears the N-acetylalanine mark. EF-hand domains are found at residues Ile13–Asn48 and Val46–Ala81. Residues His17 and His27 each contribute to the Zn(2+) site. Asp33 lines the Ca(2+) pocket. Position 42 is an S-nitrosocysteine (Cys42). Ca(2+) contacts are provided by Asp59, Asn61, Asp63, and Glu70. His83 provides a ligand contact to Zn(2+).

This sequence belongs to the S-100 family. In terms of assembly, homodimer. Preferentially exists as a heterodimer or heterotetramer with S100A9 known as calprotectin (S100A8/A9). S100A8 interacts with AGER, ATP2A2 and with the heterodimeric complex formed by TLR4 and LY96. Calprotectin (S100A8/9) interacts with CEACAM3 and tubulin filaments in a calcium-dependent manner. Heterotetrameric calprotectin (S100A8/A9) interacts with ANXA6 and associates with tubulin filaments in activated monocytes. S100A8 and calprotectin (S100A8/9) interact with NCF2/P67PHOX, RAC1 and RAC2. Calprotectin (S100A8/9) interacts with CYBA and CYBB. Calprotectin (S100A8/9) interacts with NOS2 to form the iNOS-S100A8/A9 transnitrosylase complex. Calprotectin (S100A8/9) interacts with CD69.

The protein localises to the secreted. The protein resides in the cytoplasm. It localises to the cytoskeleton. Its subcellular location is the cell membrane. In terms of biological role, S100A8 is a calcium- and zinc-binding protein which plays a prominent role in the regulation of inflammatory processes and immune response. It can induce neutrophil chemotaxis and adhesion. Predominantly found as calprotectin (S100A8/A9) which has a wide plethora of intra- and extracellular functions. The intracellular functions include: facilitating leukocyte arachidonic acid trafficking and metabolism, modulation of the tubulin-dependent cytoskeleton during migration of phagocytes and activation of the neutrophilic NADPH-oxidase. Also participates in regulatory T-cell differentiation together with CD69. Activates NADPH-oxidase by facilitating the enzyme complex assembly at the cell membrane, transferring arachidonic acid, an essential cofactor, to the enzyme complex and S100A8 contributes to the enzyme assembly by directly binding to NCF2/P67PHOX. The extracellular functions involve pro-inflammatory, antimicrobial, oxidant-scavenging and apoptosis-inducing activities. Its pro-inflammatory activity includes recruitment of leukocytes, promotion of cytokine and chemokine production, and regulation of leukocyte adhesion and migration. Acts as an alarmin or a danger associated molecular pattern (DAMP) molecule and stimulates innate immune cells via binding to pattern recognition receptors such as Toll-like receptor 4 (TLR4) and receptor for advanced glycation endproducts (AGER). Binding to TLR4 and AGER activates the MAP-kinase and NF-kappa-B signaling pathways resulting in the amplification of the pro-inflammatory cascade. Has antimicrobial activity towards bacteria and fungi and exerts its antimicrobial activity probably via chelation of Zn(2+) which is essential for microbial growth. Can induce cell death via autophagy and apoptosis and this occurs through the cross-talk of mitochondria and lysosomes via reactive oxygen species (ROS) and the process involves BNIP3. Can regulate neutrophil number and apoptosis by an anti-apoptotic effect; regulates cell survival via ITGAM/ITGB and TLR4 and a signaling mechanism involving MEK-ERK. Its role as an oxidant scavenger has a protective role in preventing exaggerated tissue damage by scavenging oxidants. The iNOS-S100A8/A9 transnitrosylase complex is proposed to direct selective inflammatory stimulus-dependent S-nitrosylation of multiple targets such as GAPDH, ANXA5, EZR, MSN and VIM by recognizing a [IL]-x-C-x-x-[DE] motif; S100A8 seems to contribute to S-nitrosylation site selectivity. This Rattus norvegicus (Rat) protein is Protein S100-A8 (S100a8).